The primary structure comprises 355 residues: Ion-translocating oxidoreductase complex subunit D (355 aa).

5 consecutive transmembrane segments (helical) span residues 13-33, 35-55, 77-97, 98-118, and 128-148; these read GKLT…ALAV, VYYF…LALI, VILT…YWVI, LIGT…LGQN, and VVLL…ISLL. Threonine 186 carries the FMN phosphoryl threonine modification. Helical transmembrane passes span 216–236, 245–265, 267–287, 294–314, and 318–338; these read AGLG…FLIW, PVAI…FGNA, AVGF…FFIA, PVTP…ICLI, and GNYP…VPLI.

This sequence belongs to the NqrB/RnfD family. As to quaternary structure, the complex is composed of six subunits: RnfA, RnfB, RnfC, RnfD, RnfE and RnfG. FMN is required as a cofactor.

Its subcellular location is the cell inner membrane. Its function is as follows. Part of a membrane-bound complex that couples electron transfer with translocation of ions across the membrane. This Actinobacillus succinogenes (strain ATCC 55618 / DSM 22257 / CCUG 43843 / 130Z) protein is Ion-translocating oxidoreductase complex subunit D.